The following is a 490-amino-acid chain: MALLLLLFLGLLGLWGLLCACAQDPSPAARWPPGPRPLPLVGNLHLLRLSQQDRSLMELSERYGPVFTVHLGRQKTVVLTGFEAVKEALAGPGQELADRPPIAIFQLIQRGGGIFFSSGARWRAARQFTVRALHSLGVGREPVADKILQELKCLSGQLDGYRGRPFPLALLGWAPSNITFALLFGRRFDYRDPVFVSLLGLIDEVMVLLGSPGLQLFNVYPWLGALLQLHRPVLRKIEEVRAILRTLLEARRPHVCPGDPVCSYVDALIQQGQGDDPEGLFAEANAVACTLDMVMAGTETTSATLQWAALLMGRHPDVQGRVQEELDRVLGPGRTPRLEDQQALPYTSAVLHEVQRFITLLPHVPRCTAADTQLGGFLLPKGTPVIPLLTSVLLDETQWQTPGQFNPGHFLDANGHFVKREAFLPFSAGRRVCVGERLARTELFLLFAGLLQRYRLLPPPGVSPASLDTTPARAFTMRPRAQALCAVPRP.

The N-terminal stretch at 1–22 (MALLLLLFLGLLGLWGLLCACA) is a signal peptide. Asn177 is a glycosylation site (N-linked (GlcNAc...) asparagine). Cys433 contributes to the heme binding site.

The protein belongs to the cytochrome P450 family. Heme serves as cofactor. In terms of tissue distribution, very low levels are detected in fetal and adult tissues. Highly expressed in several tumor samples, in particular colon and adrenal tumors.

The protein resides in the endoplasmic reticulum lumen. Its subcellular location is the cell membrane. The protein localises to the microsome membrane. It carries out the reaction all-trans-retinoate + reduced [NADPH--hemoprotein reductase] + O2 = all-trans-4-hydroxyretinoate + oxidized [NADPH--hemoprotein reductase] + H2O + H(+). The enzyme catalyses 1-(9Z-octadecenoyl)-sn-glycero-3-phosphocholine + reduced [NADPH--hemoprotein reductase] + O2 = 1-[8-hydroxy-(9Z)-octadecenoyl]-sn-glycero-3-phosphocholine + oxidized [NADPH--hemoprotein reductase] + H2O + H(+). It catalyses the reaction 1-(9Z-octadecenoyl)-sn-glycero-3-phosphocholine + reduced [NADPH--hemoprotein reductase] + O2 = 1-[11-hydroxy-(9Z)-octadecenoyl]-sn-glycero-3-phosphocholine + oxidized [NADPH--hemoprotein reductase] + H2O + H(+). The catalysed reaction is 1-(9Z-octadecenoyl)-sn-glycero-3-phosphocholine + reduced [NADPH--hemoprotein reductase] + O2 = 1-[(9S,10R)-epoxy-octadecanoyl]-sn-glycero-3-phosphocholine + oxidized [NADPH--hemoprotein reductase] + H2O + H(+). It carries out the reaction 1-(9Z-octadecenoyl)-sn-glycero-3-phosphocholine + reduced [NADPH--hemoprotein reductase] + O2 = 1-[(9R,10S)-epoxy-octadecanoyl]-sn-glycero-3-phosphocholine + oxidized [NADPH--hemoprotein reductase] + H2O + H(+). In terms of biological role, a cytochrome P450 monooxygenase that may play a role in retinoid and phospholipid metabolism. Catalyzes the hydroxylation of saturated carbon hydrogen bonds. Hydroxylates all trans-retinoic acid (atRA) to 4-hydroxyretinoate and may regulate atRA clearance. Other retinoids such as all-trans retinol and all-trans retinal are potential endogenous substrates. Catalyzes both epoxidation of double bonds and hydroxylation of carbon hydrogen bonds of the fatty acyl chain of 1-acylphospholipids/2-lysophospholipids. Can metabolize various lysophospholipids classes including lysophosphatidylcholines (LPCs), lysophosphatidylinositols (LPIs), lysophosphatidylserines (LPSs), lysophosphatidylglycerols (LPGs), lysophosphatidylethanolamines (LPEs) and lysophosphatidic acids (LPAs). Has low or no activity toward 2-acylphospholipids/1-lysophospholipids, diacylphospholipids and free fatty acids. May play a role in tumorigenesis by activating procarcinogens such as aflatoxin B1, polycyclic aromatic hydrocarbon dihydrodiols and aromatic amines. Mechanistically, uses molecular oxygen inserting one oxygen atom into a substrate, and reducing the second into a water molecule, with two electrons provided by NADPH via cytochrome P450 reductase (CPR; NADPH-ferrihemoprotein reductase). This chain is Cytochrome P450 2W1, found in Homo sapiens (Human).